The sequence spans 139 residues: ATP synthase epsilon chain (139 aa).

The protein belongs to the ATPase epsilon chain family. F-type ATPases have 2 components, CF(1) - the catalytic core - and CF(0) - the membrane proton channel. CF(1) has five subunits: alpha(3), beta(3), gamma(1), delta(1), epsilon(1). CF(0) has three main subunits: a, b and c.

The protein localises to the cell inner membrane. Functionally, produces ATP from ADP in the presence of a proton gradient across the membrane. The polypeptide is ATP synthase epsilon chain (atpC) (Escherichia coli O157:H7).